Reading from the N-terminus, the 849-residue chain is Disks large homolog 3 (849 aa).

The segment at 32 to 101 (DWQVPDPYGP…GKSTPKLNGS (70 aa)) is disordered. Gly residues predominate over residues 41 to 53 (PSGGNGASSGYGG). The segment covering 57–69 (QTLPSQAGATPTP) has biased composition (polar residues). 3 consecutive PDZ domains span residues 149–235 (EIVL…VRRR), 244–330 (EVNL…VAKP), and 404–484 (KIIL…AQYR). At S157 the chain carries Phosphoserine. Residues 519-589 (KRSLYVRALF…PSKKRVEKKE (71 aa)) form the SH3 domain. Positions 659 to 834 (ARPVIILGPM…IYNKIKQIIE (176 aa)) constitute a Guanylate kinase-like domain. A Phosphotyrosine modification is found at Y705.

It belongs to the MAGUK family. As to quaternary structure, interacts through its PDZ domains with NETO1, GRIN2B, SYNGAP1 and APC. Interacts through its first two PDZ domains with ERBB4. Interacts through its third PDZ domain with NLGN1, and probably with NLGN2 and NLGN3. Interacts through its guanylate kinase-like domain with DLGAP1, DLGAP2, DLGAP3 and DLGAP4. Interacts with FRMPD4 (via C-terminus). Interacts with LRFN1, LRFN2 and LRFN4. Interacts with FLTP. Interacts with GPR85. Interacts with DGKI (via PDZ-binding motif).

Its function is as follows. Required for learning most likely through its role in synaptic plasticity following NMDA receptor signaling. The protein is Disks large homolog 3 (Dlg3) of Mus musculus (Mouse).